The primary structure comprises 376 residues: N-acetyldiaminopimelate deacetylase (376 aa).

Asp-69 is an active-site residue. Glu-128 functions as the Proton acceptor in the catalytic mechanism.

It belongs to the peptidase M20A family. N-acetyldiaminopimelate deacetylase subfamily.

It carries out the reaction N-acetyl-(2S,6S)-2,6-diaminopimelate + H2O = (2S,6S)-2,6-diaminopimelate + acetate. The protein operates within amino-acid biosynthesis; L-lysine biosynthesis via DAP pathway; LL-2,6-diaminopimelate from (S)-tetrahydrodipicolinate (acetylase route): step 3/3. Catalyzes the conversion of N-acetyl-diaminopimelate to diaminopimelate and acetate. The protein is N-acetyldiaminopimelate deacetylase of Streptococcus pneumoniae (strain JJA).